A 648-amino-acid polypeptide reads, in one-letter code: Mitotic interactor and substrate of PLK1 (648 aa).

Position 77 is a phosphoserine; by CDK1 (Ser77). 2 positions are modified to phosphothreonine: Thr149 and Thr190. Ser220 carries the phosphoserine modification. Disordered regions lie at residues 242 to 383 (VNDP…PEAR) and 430 to 460 (KATE…GKAT). Ser253 bears the Phosphoserine; by CDK1 mark. Over residues 255-281 (ETPKETPIEREIRLAQEREAELREQRG) the composition is skewed to basic and acidic residues. A Phosphothreonine; by CDK1 modification is found at Thr256. Ser318 is modified (phosphoserine). Basic and acidic residues predominate over residues 325–339 (MVQETQREEDHRREG). Thr347 is modified (phosphothreonine; by CDK1). Residues 349 to 367 (DWPSQDPQPGLQRSLSSDC) show a composition bias toward polar residues. 2 positions are modified to phosphoserine: Ser352 and Ser364. Phosphoserine; by PLK1 is present on residues Ser365 and Ser439. Polar residues predominate over residues 440–450 (ESSGRSLSSKQ). Ser507 and Ser509 each carry phosphoserine. Residues 511–534 (DLLEREMESVLRREREVAEERRNA) adopt a coiled-coil conformation. The disordered stretch occupies residues 539-568 (VFSPVPAEDESHEQDSRSSSRASGITGSYS). Ser541 carries the phosphoserine; by CDK1 modification. The residue at position 554 (Ser554) is a Phosphoserine; by PLK1. Residues 557–568 (SSRASGITGSYS) are compositionally biased toward polar residues. Ser644 is modified (phosphoserine).

The protein belongs to the MISP family. In terms of assembly, associates with F-actin. Interacts with DCTN1; this interaction regulates DCTN1 distribution at the cell cortex. Interacts with PTK2/FAK and MAPRE1. In terms of processing, phosphorylated by CDK1 and PLK1. CDK1 is the priming kinase for PLK1 phosphorylation. Phosphorylation by PLK1 is required for proper spindle orientation at metaphase.

It is found in the cell junction. Its subcellular location is the focal adhesion. The protein resides in the cytoplasm. The protein localises to the cytoskeleton. It localises to the cell cortex. In terms of biological role, plays a role in mitotic spindle orientation and mitotic progression. Regulates the distribution of dynactin at the cell cortex in a PLK1-dependent manner, thus stabilizing cortical and astral microtubule attachments required for proper mitotic spindle positioning. May link microtubules to the actin cytoskeleton and focal adhesions. May be required for directed cell migration and centrosome orientation. May also be necessary for proper stacking of the Golgi apparatus. This is Mitotic interactor and substrate of PLK1 from Mus musculus (Mouse).